We begin with the raw amino-acid sequence, 215 residues long: Pyridoxine/pyridoxamine 5'-phosphate oxidase (215 aa).

Substrate is bound by residues Arg-9–Tyr-12 and Lys-69. FMN contacts are provided by residues Arg-64 to Lys-69, Phe-79 to Thr-80, Lys-86, and Gln-108. Positions 126, 130, and 134 each coordinate substrate. Residues Gln-143 to Ser-144 and Trp-188 each bind FMN. Arg-194 to His-196 contributes to the substrate binding site. Residue Arg-198 coordinates FMN.

The protein belongs to the pyridoxamine 5'-phosphate oxidase family. In terms of assembly, homodimer. FMN serves as cofactor.

The enzyme catalyses pyridoxamine 5'-phosphate + O2 + H2O = pyridoxal 5'-phosphate + H2O2 + NH4(+). The catalysed reaction is pyridoxine 5'-phosphate + O2 = pyridoxal 5'-phosphate + H2O2. The protein operates within cofactor metabolism; pyridoxal 5'-phosphate salvage; pyridoxal 5'-phosphate from pyridoxamine 5'-phosphate: step 1/1. It functions in the pathway cofactor metabolism; pyridoxal 5'-phosphate salvage; pyridoxal 5'-phosphate from pyridoxine 5'-phosphate: step 1/1. Functionally, catalyzes the oxidation of either pyridoxine 5'-phosphate (PNP) or pyridoxamine 5'-phosphate (PMP) into pyridoxal 5'-phosphate (PLP). This is Pyridoxine/pyridoxamine 5'-phosphate oxidase from Pseudomonas fluorescens (strain SBW25).